Here is a 1034-residue protein sequence, read N- to C-terminus: Beta-galactosidase (1034 aa).

Glu481 (proton donor) is an active-site residue. The active-site Nucleophile is the Glu547.

The protein belongs to the glycosyl hydrolase 2 family.

The enzyme catalyses Hydrolysis of terminal non-reducing beta-D-galactose residues in beta-D-galactosides.. This Priestia megaterium (strain DSM 319 / IMG 1521) (Bacillus megaterium) protein is Beta-galactosidase (bgaM).